Reading from the N-terminus, the 721-residue chain is Probable acyl-activating enzyme 17, peroxisomal (721 aa).

A Microbody targeting signal motif is present at residues 719-721 (SKL).

This sequence belongs to the ATP-dependent AMP-binding enzyme family. As to expression, expressed in leaves, stems and developing seeds.

Its subcellular location is the peroxisome. Functionally, may act as an acid--thiol ligase that activates carboxylic acids by forming acyl-CoAs. The chain is Probable acyl-activating enzyme 17, peroxisomal (AAE17) from Arabidopsis thaliana (Mouse-ear cress).